The sequence spans 159 residues: U1 small nuclear ribonucleoprotein C (159 aa).

The Matrin-type zinc finger occupies 4–36 (FYCDYCDTYLTHDSPSVRKTHCSGRKHKENVKD). Disordered stretches follow at residues 63–95 (PPTP…MPAP) and 139–159 (MRPP…RPDR). Positions 77-95 (IPPPPSMGGPPRPGMMPAP) are enriched in pro residues.

It belongs to the U1 small nuclear ribonucleoprotein C family. As to quaternary structure, component of the U1 snRNP. The U1 snRNP is composed of the U1 snRNA and the 7 core Sm proteins snrpb, snrpd1, snrpd2, snrpd3, snrpe, snrpf and snrpg that assemble in a heptameric protein ring on the Sm site of the small nuclear RNA to form the core snRNP, and at least 3 U1 snRNP-specific proteins snrnp70/U1-70K, snrpa/U1-A and snrpc/U1-C. snrpc/U1-C interacts with U1 snRNA and the 5' splice-site region of the pre-mRNA.

The protein localises to the nucleus. Component of the spliceosomal U1 snRNP, which is essential for recognition of the pre-mRNA 5' splice-site and the subsequent assembly of the spliceosome. snrpc/U1-C is directly involved in initial 5' splice-site recognition for both constitutive and regulated alternative splicing. The interaction with the 5' splice-site seems to precede base-pairing between the pre-mRNA and the U1 snRNA. Stimulates commitment or early (E) complex formation by stabilizing the base pairing of the 5' end of the U1 snRNA and the 5' splice-site region. The polypeptide is U1 small nuclear ribonucleoprotein C (Xenopus tropicalis (Western clawed frog)).